The primary structure comprises 864 residues: Disintegrin and metalloproteinase domain-containing protein 15 (864 aa).

A signal peptide spans 1–17 (MRLALLWALGLLGAGSP). Residues 17–49 (PRPSPPLPNIGGTEEEQQASPERTQSRSLENQV) form a disordered region. Residues 18–208 (RPSPPLPNIG…EQHHLRRLKR (191 aa)) constitute a propeptide that is removed on maturation. Polar residues predominate over residues 34–49 (QASPERTQSRSLENQV). N-linked (GlcNAc...) asparagine glycosylation occurs at Asn57. Residues 178-185 (HTCAPSWH) carry the Cysteine switch motif. Position 180 (Cys180) interacts with Zn(2+). Topologically, residues 209–698 (DVVTETKIVE…QLRATSSLTT (490 aa)) are extracellular. The 202-residue stretch at 215 to 416 (KIVELVIVAD…GMGSCLFEWP (202 aa)) folds into the Peptidase M12B domain. Asn239 carries an N-linked (GlcNAc...) asparagine glycan. Intrachain disulfides connect Cys325-Cys411, Cys367-Cys395, Cys369-Cys378, and Cys482-Cys502. Residue His350 coordinates Zn(2+). Glu351 is an active-site residue. Zn(2+) is bound by residues His354 and His360. 2 N-linked (GlcNAc...) asparagine glycosylation sites follow: Asn391 and Asn394. Residues 423–510 (SSLCGNMFVD…QCPPDIRLGD (88 aa)) enclose the Disintegrin domain. Residues Asn608 and Asn613 are each glycosylated (N-linked (GlcNAc...) asparagine). Intrachain disulfides connect Cys659-Cys669, Cys663-Cys675, and Cys677-Cys686. Residues 659-687 (CRSKCHGHGVCDSSRHCHCDEGWAPPDCM) form the EGF-like domain. A helical membrane pass occupies residues 699–719 (GLLLSLLLLLVLVLLGASYWY). Phosphotyrosine; by HCK and LCK occurs at positions 717 and 737. Residues 720–864 (RARLHQRLCQ…PPPAASSLYL (145 aa)) are Cytoplasmic-facing. The segment at 738-864 (RAAQSGPPER…PPPAASSLYL (127 aa)) is disordered. A compositionally biased stretch (polar residues) spans 753–765 (RAQQMPGTKQANV). Pro residues-rich tracts occupy residues 768–780 (PVPPSRPLPPNPV) and 810–825 (PQGPTKPPPPRKPLPA). An SH3-binding motif is present at residues 816-822 (PPPPRKP). Positions 826–850 (NPQGRPPLGDLPGPGDGSLQLVVPS) are enriched in low complexity. Positions 851–857 (RPAPPPP) match the SH3-binding motif.

In terms of assembly, interacts with ITAGV-ITGB3 (vitronectin receptor). Interacts with SH3GL2 and SNX9; this interaction occurs preferentially with ADAM15 precursor, rather than the processed form, suggesting it occurs in a secretory pathway compartment prior to the medial Golgi. Interacts with ITAG9-ITGB1. Interacts specifically with Src family protein-tyrosine kinases (PTKs). Interacts with SH3PXD2A. Interacts with ITAGV-ITGB1. Interacts with GRB2, HCK, ITSN1, ITSN2, LYN, MAPK1, MAPK3, NCF1, NCK1, nephrocystin, PTK6, SNX33, LCK and SRC. The cofactor is Zn(2+). In terms of processing, the precursor is cleaved by a furin endopeptidase. Post-translationally, phosphorylation increases association with PTKs. Predominantly expressed in brain, spinal cord, sciatic nerve and lung. Expressed at lower levels in all other tissues. In the peripheral nervous system, expressed predominantly by Schwann cells. In the central nervous system, preferentially expressed by neuronal cells.

The protein resides in the endomembrane system. It is found in the cell junction. The protein localises to the adherens junction. Its subcellular location is the cell projection. It localises to the cilium. The protein resides in the flagellum. It is found in the cytoplasmic vesicle. The protein localises to the secretory vesicle. Its subcellular location is the acrosome. Functionally, active metalloproteinase with gelatinolytic and collagenolytic activity. Plays a role in the wound healing process. Mediates both heterotypic intraepithelial cell/T-cell interactions and homotypic T-cell aggregation. Inhibits beta-1 integrin-mediated cell adhesion and migration of airway smooth muscle cells. Suppresses cell motility on or towards fibronectin possibly by driving alpha-v/beta-1 integrin (ITAGV-ITGB1) cell surface expression via ERK1/2 inactivation. Cleaves E-cadherin in response to growth factor deprivation. Plays a role in glomerular cell migration. Plays a role in pathological neovascularization. May play a role in cartilage remodeling. May be proteolytically processed, during sperm epididymal maturation and the acrosome reaction. May play a role in sperm-egg binding through its disintegrin domain. The polypeptide is Disintegrin and metalloproteinase domain-containing protein 15 (Adam15) (Rattus norvegicus (Rat)).